A 335-amino-acid chain; its full sequence is N-acetyl-gamma-glutamyl-phosphate reductase (335 aa).

Residue Cys-156 is part of the active site.

Belongs to the NAGSA dehydrogenase family. Type 1 subfamily.

The protein localises to the cytoplasm. It carries out the reaction N-acetyl-L-glutamate 5-semialdehyde + phosphate + NADP(+) = N-acetyl-L-glutamyl 5-phosphate + NADPH + H(+). The protein operates within amino-acid biosynthesis; L-arginine biosynthesis; N(2)-acetyl-L-ornithine from L-glutamate: step 3/4. Its function is as follows. Catalyzes the NADPH-dependent reduction of N-acetyl-5-glutamyl phosphate to yield N-acetyl-L-glutamate 5-semialdehyde. In Tolumonas auensis (strain DSM 9187 / NBRC 110442 / TA 4), this protein is N-acetyl-gamma-glutamyl-phosphate reductase.